Consider the following 143-residue polypeptide: Small ribosomal subunit protein uS9 (143 aa).

The segment at 123-143 (RPEPKKFGGRGARSRFQKSYR) is disordered. Positions 134–143 (ARSRFQKSYR) are enriched in basic residues.

This sequence belongs to the universal ribosomal protein uS9 family.

In Kluyveromyces lactis (strain ATCC 8585 / CBS 2359 / DSM 70799 / NBRC 1267 / NRRL Y-1140 / WM37) (Yeast), this protein is Small ribosomal subunit protein uS9 (RPS16).